The following is a 218-amino-acid chain: Ropporin-1-like protein (218 aa).

The 38-residue stretch at proline 17–proline 54 folds into the RIIa domain.

Belongs to the ropporin family. As to quaternary structure, component of the axonemal radial spoke complex 1 (RS1), at least composed of spoke head proteins RSPH1, RSPH3, RSPH9 and the cilia-specific component RSPH4A or sperm-specific component RSPH6A, spoke stalk proteins RSPH14, DNAJB13, DYDC1, ROPN1L and NME5, and the anchor protein IQUB. May interact with AKAP3. Interacts with FSCB; the interaction increases upon spermatozoa capacitation conditions. Interacts with CFAP61. In terms of processing, sumoylated, sumoylation decreases upon spermatozoa capacitation conditions. In terms of tissue distribution, testis-specific. Expression is restricted to germ cells.

It localises to the cell projection. Its subcellular location is the cilium. It is found in the flagellum. Functionally, functions as part of axonemal radial spoke complexes that play an important part in the motility of sperm and cilia. Important for male fertility. With ROPN1, involved in fibrous sheath integrity and sperm motility, plays a role in PKA-dependent signaling processes required for spermatozoa capacitation. This chain is Ropporin-1-like protein (Ropn1l), found in Mus musculus (Mouse).